A 505-amino-acid chain; its full sequence is MASIDFRNKINWHRRYRSPQGVKTEHEILRIFESDRGRIINSPAIRRLQQKTQVFPLERNAAVRTRLTHSMEVQQVGRYIAKEILSRLKAQNLLEEYGLDALTGPFESIVEMACLMHDIGNPPFGHFGEAAINDWFRQRLYPEDAESQPLTHDRCVVSSLRLQEGEESLNDIRRKVRQDICYFEGNAQGIRLVHTLMRMNLTWAQVGGILKYTRPAWWRGPVPDSHRYLMKKPGYYLSEEKYIARLRKELQLAPYSRFPLTWIMEAADDISYCVADLEDAVEKRIFSVEQLYHHLYHAWGHHEKDSLFELVVGNAWEKSRANTLSRSTEEQFFMYLRVNTLNKLVPYAAQRFIDNLPQIFAGTFNQALLEDASGFSRLLELYKNVAVEHVFSHPDVEQLELQGYRVISGLLDIYQPLLSMSLNDFSELVEKERLKRFPIESRLFQKLSTRHRLAYVEVVSKLPMDSAEYPVLEYYYRCRLVQDYISGMTDLYAWDEYRRLMAVEQ.

Residues 66-273 enclose the HD domain; the sequence is RLTHSMEVQQ…MEAADDISYC (208 aa).

The protein belongs to the dGTPase family. Type 1 subfamily. As to quaternary structure, homotetramer. Requires Mg(2+) as cofactor.

The catalysed reaction is dGTP + H2O = 2'-deoxyguanosine + triphosphate + H(+). In terms of biological role, dGTPase preferentially hydrolyzes dGTP over the other canonical NTPs. The sequence is that of Deoxyguanosinetriphosphate triphosphohydrolase from Salmonella arizonae (strain ATCC BAA-731 / CDC346-86 / RSK2980).